We begin with the raw amino-acid sequence, 170 residues long: Bifunctional protein PyrR (170 aa).

The PRPP-binding motif lies at 90 to 102 (LVLVDDVLMSGRT).

Belongs to the purine/pyrimidine phosphoribosyltransferase family. PyrR subfamily.

The enzyme catalyses UMP + diphosphate = 5-phospho-alpha-D-ribose 1-diphosphate + uracil. Its function is as follows. Regulates the transcription of the pyrimidine nucleotide (pyr) operon in response to exogenous pyrimidines. Functionally, also displays a weak uracil phosphoribosyltransferase activity which is not physiologically significant. This is Bifunctional protein PyrR from Pseudomonas paraeruginosa (strain DSM 24068 / PA7) (Pseudomonas aeruginosa (strain PA7)).